The chain runs to 737 residues: Catalase-peroxidase (737 aa).

The disordered stretch occupies residues 1–32 (MSKENMSNEGKCPFNHGAAGTNQSSGRGTSNK). The segment covering 20–32 (GTNQSSGRGTSNK) has biased composition (polar residues). A cross-link (tryptophyl-tyrosyl-methioninium (Trp-Tyr) (with M-252)) is located at residues 103-226 (WHSAGTYRTA…LAAVQMGLIY (124 aa)). His-104 serves as the catalytic Proton acceptor. The tryptophyl-tyrosyl-methioninium (Tyr-Met) (with W-103) cross-link spans 226–252 (YVNPEGPEGKPDTLASARDIRDTFGRM). Residue His-267 participates in heme b binding.

The protein belongs to the peroxidase family. Peroxidase/catalase subfamily. As to quaternary structure, homodimer or homotetramer. The cofactor is heme b. Formation of the three residue Trp-Tyr-Met cross-link is important for the catalase, but not the peroxidase activity of the enzyme.

It catalyses the reaction H2O2 + AH2 = A + 2 H2O. The catalysed reaction is 2 H2O2 = O2 + 2 H2O. Bifunctional enzyme with both catalase and broad-spectrum peroxidase activity. This is Catalase-peroxidase from Marinomonas sp. (strain MWYL1).